Reading from the N-terminus, the 990-residue chain is Presequence protease, mitochondrial (990 aa).

A mitochondrion-targeting transit peptide spans 1 to 25 (MLRLKSLKKPVQAVVRRFATTSAPT). Zn(2+) is bound at residue His89. Glu92 serves as the catalytic Proton acceptor. His93 lines the Zn(2+) pocket. Residue Glu165 is part of the active site. Glu190 provides a ligand contact to Zn(2+).

It belongs to the peptidase M16 family. PreP subfamily. In terms of assembly, monomer and homodimer; homodimerization is induced by binding of the substrate. Zn(2+) serves as cofactor.

It localises to the mitochondrion intermembrane space. It is found in the mitochondrion matrix. Functionally, degrades mitochondrial transit peptides after their cleavage in the intermembrane space or in the matrix, and presequence peptides; clearance of these peptides is required to keep the presequence processing machinery running. Preferentially cleaves the N-terminal side of paired basic amino acid residues. Also degrades other unstructured peptides. May function as an ATP-dependent peptidase as opposed to a metalloendopeptidase. The protein is Presequence protease, mitochondrial (CYM1) of Yarrowia lipolytica (strain CLIB 122 / E 150) (Yeast).